We begin with the raw amino-acid sequence, 229 residues long: Orotidine 5'-phosphate decarboxylase (229 aa).

Substrate is bound by residues Asp12, Lys34, 61 to 70 (DWKLHDIGAT), Thr116, Arg177, Gln186, Gly206, and Arg207. The active-site Proton donor is the Lys63.

It belongs to the OMP decarboxylase family. Type 1 subfamily. Homodimer.

It carries out the reaction orotidine 5'-phosphate + H(+) = UMP + CO2. It participates in pyrimidine metabolism; UMP biosynthesis via de novo pathway; UMP from orotate: step 2/2. Catalyzes the decarboxylation of orotidine 5'-monophosphate (OMP) to uridine 5'-monophosphate (UMP). The chain is Orotidine 5'-phosphate decarboxylase from Caulobacter sp. (strain K31).